The following is a 504-amino-acid chain: U3 snoRNP-associated protein-like YAO (504 aa).

Residues 1–120 are disordered; that stretch reads MKYNNEKKKG…DDDDDEDDDE (120 aa). A compositionally biased stretch (basic and acidic residues) spans 20–33; it reads GSNERDPFFEEEPK. Acidic residues-rich tracts occupy residues 41–54 and 70–81; these read DDDD…DAEE and EVEDEDEFADET. The segment covering 89–106 has biased composition (basic and acidic residues); that stretch reads LAEEMLNRRREAMRRERE. Over residues 107–120 the composition is skewed to acidic residues; that stretch reads EADNDDDDDEDDDE. WD repeat units follow at residues 159 to 198, 220 to 259, 262 to 301, 304 to 342, 344 to 382, 413 to 452, and 456 to 496; these read KHRR…TDKY, NHSR…HVQA, GHRN…FITE, GHQG…RMIY, APAS…PVFV, SANS…IRPL, and PLTG…QNGV.

It belongs to the WD repeat RRP9 family. Expressed in tissues with active in cell division such as shoot apexes, root tips, lateral root primordia, embryos, endosperm, pollen grains and embryo sacs.

The protein resides in the nucleus. Its subcellular location is the nucleolus. Functionally, component of a nucleolar small nuclear ribonucleoprotein particle (snoRNP) thought to participate in the processing and modification of pre-ribosomal RNA. Essential for embryogenesis. Plays a critical role in embryo sac development and gametic cell fate. Required for the correct positioning of the first division plane of zygote. May function during early embryogenesis. The chain is U3 snoRNP-associated protein-like YAO from Arabidopsis thaliana (Mouse-ear cress).